A 180-amino-acid chain; its full sequence is Ribosome-recycling factor (180 aa).

This sequence belongs to the RRF family.

The protein localises to the cytoplasm. In terms of biological role, responsible for the release of ribosomes from messenger RNA at the termination of protein biosynthesis. May increase the efficiency of translation by recycling ribosomes from one round of translation to another. The protein is Ribosome-recycling factor of Chlamydia abortus (strain DSM 27085 / S26/3) (Chlamydophila abortus).